Reading from the N-terminus, the 237-residue chain is Ribonuclease PH (237 aa).

Phosphate is bound by residues arginine 86 and 124–126; that span reads GTR.

The protein belongs to the RNase PH family. In terms of assembly, homohexameric ring arranged as a trimer of dimers.

It carries out the reaction tRNA(n+1) + phosphate = tRNA(n) + a ribonucleoside 5'-diphosphate. Functionally, phosphorolytic 3'-5' exoribonuclease that plays an important role in tRNA 3'-end maturation. Removes nucleotide residues following the 3'-CCA terminus of tRNAs; can also add nucleotides to the ends of RNA molecules by using nucleoside diphosphates as substrates, but this may not be physiologically important. Probably plays a role in initiation of 16S rRNA degradation (leading to ribosome degradation) during starvation. In Methylobacterium radiotolerans (strain ATCC 27329 / DSM 1819 / JCM 2831 / NBRC 15690 / NCIMB 10815 / 0-1), this protein is Ribonuclease PH.